A 374-amino-acid polypeptide reads, in one-letter code: Hydroxylysine kinase (374 aa).

Asp228 acts as the Proton acceptor in catalysis.

The protein belongs to the aminoglycoside phosphotransferase family.

It is found in the cytoplasm. It carries out the reaction (5R)-5-hydroxy-L-lysine + GTP = (5R)-5-phosphooxy-L-lysine + GDP + H(+). In terms of biological role, catalyzes the GTP-dependent phosphorylation of 5-hydroxy-L-lysine. In Xenopus laevis (African clawed frog), this protein is Hydroxylysine kinase (hykk).